The primary structure comprises 104 residues: Large ribosomal subunit protein uL23 (104 aa).

Belongs to the universal ribosomal protein uL23 family. As to quaternary structure, part of the 50S ribosomal subunit. Contacts protein L29, and trigger factor when it is bound to the ribosome.

One of the early assembly proteins it binds 23S rRNA. One of the proteins that surrounds the polypeptide exit tunnel on the outside of the ribosome. Forms the main docking site for trigger factor binding to the ribosome. This is Large ribosomal subunit protein uL23 from Paraburkholderia phytofirmans (strain DSM 17436 / LMG 22146 / PsJN) (Burkholderia phytofirmans).